The primary structure comprises 2253 residues: Genome polyprotein (2253 aa).

Cysteine 627 and cysteine 694 are joined by a disulfide. Residues 750 to 752 (RVD) carry the Cell attachment site motif. Residues 825–920 (LVYKNRGFYK…LFPGRKEITQ (96 aa)) form the LRAT domain. Residues histidine 835 and histidine 846 each act as for protein 2A H-NC in the active site. Cysteine 904 serves as the catalytic For protein 2A H-NC; Acyl-thioester intermediate. The helical transmembrane segment at 1002–1022 (IVLYCHAPNMLTTMCLGTLLV) threads the bilayer. Residues 1205 to 1366 (YSEMMRVNVR…ASYSRNNKLD (162 aa)) form the SF3 helicase domain. Tyrosine 1559 is subject to O-(5'-phospho-RNA)-tyrosine. A Peptidase C3 domain is found at 1586–1775 (APYMQDLEHC…RAAAVHFISN (190 aa)). Active-site for protease 3C activity residues include histidine 1626, aspartate 1664, and cysteine 1739. Catalysis depends on cysteine 1970, which acts as the Acyl-thioester intermediate. The region spanning 2018 to 2132 (PYNYGLDYSS…SVSSPLDAEY (115 aa)) is the RdRp catalytic domain. 2 residues coordinate Mg(2+): aspartate 2024 and aspartate 2118.

It belongs to the picornaviruses polyprotein family. As to quaternary structure, interacts with capsid protein VP1 and capsid protein VP3 to form heterotrimeric protomers. Five protomers subsequently associate to form pentamers which serve as building blocks for the capsid. In terms of assembly, interacts with capsid protein VP0, and capsid protein VP3 to form heterotrimeric protomers. Five protomers subsequently associate to form pentamers which serve as building blocks for the capsid. Interacts with capsid protein VP0 and capsid protein VP1 to form heterotrimeric protomers. Five protomers subsequently associate to form pentamers which serve as building blocks for the capsid. As to quaternary structure, homohexamer; forms a hexameric ring structure with 6-fold symmetry characteristic of AAA+ ATPases. In terms of assembly, homodimer. Interacts with host ACBD3. Interacts with RNA-directed RNA polymerase. As to quaternary structure, interacts with Viral protein genome-linked. The cofactor is Mg(2+). In terms of processing, VPg is uridylylated by the polymerase and is covalently linked to the 5'-end of genomic RNA. This uridylylated form acts as a nucleotide-peptide primer for the polymerase. Post-translationally, specific enzymatic cleavages yield mature proteins. All cleavages are catalyzed by P3C.

Its subcellular location is the virion. The protein localises to the host cytoplasm. The protein resides in the host nucleus. It localises to the host nucleolus. It is found in the host cytoplasmic vesicle membrane. Its subcellular location is the host endoplasmic reticulum membrane. The protein localises to the host Golgi apparatus membrane. The catalysed reaction is RNA(n) + a ribonucleoside 5'-triphosphate = RNA(n+1) + diphosphate. The enzyme catalyses a ribonucleoside 5'-triphosphate + H2O = a ribonucleoside 5'-diphosphate + phosphate + H(+). It catalyses the reaction Selective cleavage of Gln-|-Gly bond in the poliovirus polyprotein. In other picornavirus reactions Glu may be substituted for Gln, and Ser or Thr for Gly.. In terms of biological role, forms an icosahedral capsid of pseudo T=3 symmetry together with capsid proteins VP1 and VP3. The capsid is 300 Angstroms in diameter, composed of 60 copies of each capsid protein and enclosing the viral positive strand RNA genome. The attachment to the host cell receptor induces virion internalization predominantly through clathrin-mediated endocytosis. Binds packaging signals present in the viral RNA. Forms an icosahedral capsid of pseudo T=3 symmetry together with capsid proteins VP0 and VP1. The capsid is 300 Angstroms in diameter, composed of 60 copies of each capsid protein and enclosing the viral positive strand RNA genome. The attachment to the host cell receptor induces virion internalization predominantly through clathrin-mediated endocytosis. Binds packaging signals present in the viral RNA. Its function is as follows. Forms an icosahedral capsid of pseudo T=3 symmetry together with capsid proteins VP0 and VP3. The capsid is 300 Angstroms in diameter, composed of 60 copies of each capsid protein and enclosing the viral positive strand RNA genome. The attachment to the host cell receptor induces virion internalization predominantly through clathrin-mediated endocytosis. Binds packaging signals present in the viral RNA. Functionally, mediates self-processing of the polyprotein by a translational effect termed 'ribosome skipping'. Mechanistically, 2A1-mediated cleavage occurs between the C-terminal glycine and the proline of the downstream protein 2A2. In terms of biological role, plays an essential role in the virus replication cycle by acting as a viroporin. Creates a pore in the host endoplasmic reticulum and as a consequence releases Ca2+ in the cytoplasm of infected cell. In turn, high levels of cytoplasmic calcium may trigger membrane trafficking and transport of viral ER-associated proteins to viroplasms, sites of viral genome replication. Induces and associates with structural rearrangements of intracellular membranes. Displays RNA-binding, nucleotide binding and NTPase activities. May play a role in virion morphogenesis and viral RNA encapsidation by interacting with the capsid protein VP3. Its function is as follows. Localizes the viral replication complex to the surface of membranous vesicles. It inhibits host cell endoplasmic reticulum-to-Golgi apparatus transport and causes the disassembly of the Golgi complex, possibly through GBF1 interaction. This would result in depletion of MHC, trail receptors and IFN receptors at the host cell surface. Plays an essential role in viral RNA replication by recruiting ACBD3 and PI4KB at the viral replication sites, thereby allowing the formation of the rearranged membranous structures where viral replication takes place. Functionally, acts as a primer for viral RNA replication and remains covalently bound to viral genomic RNA. VPg is uridylylated prior to priming replication into VPg-pUpU. The VPg-pUpU is then used as primer on the genomic RNA poly(A) by the RNA-dependent RNA polymerase to replicate the viral genome. Following genome release from the infecting virion in the cytoplasm, the VPg-RNA linkage is probably removed by host TDP2. During the late stage of the replication cycle, host TDP2 is excluded from sites of viral RNA synthesis and encapsidation, allowing for the generation of progeny virions. In terms of biological role, cysteine protease that generates mature viral proteins from the precursor polyprotein. In addition to its proteolytic activity, it binds to viral RNA, and thus influences viral genome replication. RNA and substrate bind cooperatively to the protease. Replicates the viral genomic RNA on the surface of intracellular membranes. Covalently attaches UMP to a tyrosine of VPg, which is used to prime RNA synthesis. The positive stranded RNA genome is first replicated at virus induced membranous vesicles, creating a dsRNA genomic replication form. This dsRNA is then used as template to synthesize positive stranded RNA genomes. ss(+)RNA genomes are either translated, replicated or encapsidated. In Ljunganvirus 1 (LV), this protein is Genome polyprotein.